A 422-amino-acid polypeptide reads, in one-letter code: Glutamate 2,3-aminomutase (422 aa).

In terms of domain architecture, Radical SAM core spans 150–371 (RRYPDRLIIN…AIPTYIVNAP (222 aa)). Residues cysteine 164, cysteine 168, and cysteine 171 each contribute to the [4Fe-4S] cluster site. Position 376 is an N6-(pyridoxal phosphate)lysine (lysine 376).

Belongs to the radical SAM superfamily. The cofactor is pyridoxal 5'-phosphate. It depends on [4Fe-4S] cluster as a cofactor.

It carries out the reaction L-glutamate = 3-aminopentanedioate. Its function is as follows. Catalyzes the interconversion of L-glutamate and L-beta-glutamate. Does not have L-lysine 2,3-aminomutase activity. The polypeptide is Glutamate 2,3-aminomutase (eam) (Clostridioides difficile (strain 630) (Peptoclostridium difficile)).